The following is a 104-amino-acid chain: Large ribosomal subunit protein uL24 (104 aa).

Belongs to the universal ribosomal protein uL24 family. As to quaternary structure, part of the 50S ribosomal subunit.

Its function is as follows. One of two assembly initiator proteins, it binds directly to the 5'-end of the 23S rRNA, where it nucleates assembly of the 50S subunit. Functionally, one of the proteins that surrounds the polypeptide exit tunnel on the outside of the subunit. The chain is Large ribosomal subunit protein uL24 from Rhodopseudomonas palustris (strain BisA53).